Reading from the N-terminus, the 93-residue chain is uncharacterized protein (93 aa).

To M.tuberculosis Rv1738.

This is an uncharacterized protein from Mycobacterium tuberculosis (strain CDC 1551 / Oshkosh).